The sequence spans 382 residues: Queuine tRNA-ribosyltransferase (382 aa).

The active-site Proton acceptor is the Asp93. Substrate is bound by residues 93–97, Asp147, Gln191, and Gly218; that span reads DSGGF. The tract at residues 249 to 255 is RNA binding; that stretch reads GVGKPED. Asp268 functions as the Nucleophile in the catalytic mechanism. The RNA binding; important for wobble base 34 recognition stretch occupies residues 273-277; that stretch reads TRNAR. Positions 306, 308, 311, and 337 each coordinate Zn(2+).

Belongs to the queuine tRNA-ribosyltransferase family. Homodimer. Within each dimer, one monomer is responsible for RNA recognition and catalysis, while the other monomer binds to the replacement base PreQ1. It depends on Zn(2+) as a cofactor.

It carries out the reaction 7-aminomethyl-7-carbaguanine + guanosine(34) in tRNA = 7-aminomethyl-7-carbaguanosine(34) in tRNA + guanine. It participates in tRNA modification; tRNA-queuosine biosynthesis. In terms of biological role, catalyzes the base-exchange of a guanine (G) residue with the queuine precursor 7-aminomethyl-7-deazaguanine (PreQ1) at position 34 (anticodon wobble position) in tRNAs with GU(N) anticodons (tRNA-Asp, -Asn, -His and -Tyr). Catalysis occurs through a double-displacement mechanism. The nucleophile active site attacks the C1' of nucleotide 34 to detach the guanine base from the RNA, forming a covalent enzyme-RNA intermediate. The proton acceptor active site deprotonates the incoming PreQ1, allowing a nucleophilic attack on the C1' of the ribose to form the product. After dissociation, two additional enzymatic reactions on the tRNA convert PreQ1 to queuine (Q), resulting in the hypermodified nucleoside queuosine (7-(((4,5-cis-dihydroxy-2-cyclopenten-1-yl)amino)methyl)-7-deazaguanosine). In Haemophilus influenzae (strain ATCC 51907 / DSM 11121 / KW20 / Rd), this protein is Queuine tRNA-ribosyltransferase.